The following is a 617-amino-acid chain: Tetratricopeptide repeat protein 39B (617 aa).

TPR repeat units follow at residues 328-361 (SLIL…QEEW) and 561-594 (PFTL…YKDY).

Belongs to the TTC39 family.

Its function is as follows. Regulates high density lipoprotein (HDL) cholesterol metabolism by promoting the ubiquitination and degradation of the oxysterols receptors LXR (NR1H2 and NR1H3). In Rattus norvegicus (Rat), this protein is Tetratricopeptide repeat protein 39B (Ttc39b).